The following is a 331-amino-acid chain: DNA-directed RNA polymerase subunit alpha (331 aa).

The segment at 1 to 230 (MKNIKTSPYI…KQMSVFNSEW (230 aa)) is alpha N-terminal domain (alpha-NTD). An alpha C-terminal domain (alpha-CTD) region spans residues 247–331 (LKPLLQKIEA…ALQKRLNKLK (85 aa)).

It belongs to the RNA polymerase alpha chain family. Homodimer. The RNAP catalytic core consists of 2 alpha, 1 beta/beta' and 1 omega subunit. When a sigma factor is associated with the core the holoenzyme is formed, which can initiate transcription.

The enzyme catalyses RNA(n) + a ribonucleoside 5'-triphosphate = RNA(n+1) + diphosphate. DNA-dependent RNA polymerase catalyzes the transcription of DNA into RNA using the four ribonucleoside triphosphates as substrates. This chain is DNA-directed RNA polymerase subunit alpha, found in Wolinella succinogenes (strain ATCC 29543 / DSM 1740 / CCUG 13145 / JCM 31913 / LMG 7466 / NCTC 11488 / FDC 602W) (Vibrio succinogenes).